The chain runs to 536 residues: Protein GvpD1 (536 aa).

An ATP-binding site is contributed by glycine 39–threonine 46. The interval glycine 352–aspartate 413 is disordered. The span at proline 363–methionine 372 shows a compositional bias: polar residues. Residues alanine 373–threonine 385 show a composition bias toward low complexity. Over residues histidine 386 to arginine 396 the composition is skewed to basic and acidic residues.

This sequence belongs to the gas vesicle GvpD family. As to quaternary structure, interacts with GvpE.

Its subcellular location is the cytoplasm. In terms of biological role, causes a decrease in the amount of GvpE protein. The 5'-region of its promoter or mRNA has a repressive function on downstream genes. Gas vesicles are hollow, gas filled proteinaceous nanostructures found in several microbial planktonic microorganisms. They allow positioning of halobacteria at the optimal depth for growth in the poorly aerated, shallow brine pools of their habitat. Functionally, expression of a 9.5 kb p-vac DNA fragment containing 2 divergently transcribed regions (gvpD-gvpE-gvpF-gvpG-gvpH-gvpI-gvpJ-gvpK-gvpL-gvpM and gvpA-gvpC-gvpN-gvpO) allows H.volcanii to produce gas vesicles. A similar region restores gas vesicle production in H.halobium without the p-vac locus, but it still has the c-vac locus. The protein is Protein GvpD1 (gvpD11) of Halobacterium salinarum (strain ATCC 700922 / JCM 11081 / NRC-1) (Halobacterium halobium).